Consider the following 231-residue polypeptide: Peroxisomal membrane protein 11E (231 aa).

Topologically, residues 1-91 are cytoplasmic; sequence MTTLDLTRAE…LPLVLLGKSK (91 aa). Residues 92–108 form a helical membrane-spanning segment; the sequence is NALLSTFLFLDQIVWLG. Over 109–202 the chain is Lumenal; the sequence is RSGIYKNKER…LLQLAPKTIS (94 aa). Residues 203–222 form a helical membrane-spanning segment; the sequence is PRVTGAFGFTTSLISCYQLL. At 223–231 the chain is on the cytoplasmic side; it reads PSRPKLKTP.

It belongs to the peroxin-11 family. Homooligomer. Interacts with ARC5 and FIS1B on peroxisomes. In terms of tissue distribution, expressed in leaves and developing siliques.

It is found in the peroxisome membrane. Functionally, involved in peroxisomal proliferation. Promotes peroxisomal duplication, aggregation or elongation without fission. This Arabidopsis thaliana (Mouse-ear cress) protein is Peroxisomal membrane protein 11E (PEX11E).